A 239-amino-acid chain; its full sequence is MSKAQTLSAADRAKLEGLIGHDFAEKERLDRALTHASARTEKGGNYERLEFLGDRVLGLCIAELLFRTFGTAGEGELSVRLNQLVSAETCAAVADELNLHLYIRTGADVKKLTGKRMMNVRADVVESLIAAIYLDGGLEVARRFILRYWQGRAVRADGAKRDAKTELQEWSHAKFGVTPIYRVDERSGPDHDPRFKVTVEVAGIKPETGVERSKRAAEQVAATKMLEREGIWQQSPAGN.

The RNase III domain occupies 12–137 (RAKLEGLIGH…LIAAIYLDGG (126 aa)). E50 provides a ligand contact to Mg(2+). D54 is a catalytic residue. The Mg(2+) site is built by D123 and E126. E126 is an active-site residue. The 70-residue stretch at 162–231 (DAKTELQEWS…ATKMLEREGI (70 aa)) folds into the DRBM domain.

It belongs to the ribonuclease III family. In terms of assembly, homodimer. It depends on Mg(2+) as a cofactor.

Its subcellular location is the cytoplasm. The enzyme catalyses Endonucleolytic cleavage to 5'-phosphomonoester.. Its function is as follows. Digests double-stranded RNA. Involved in the processing of primary rRNA transcript to yield the immediate precursors to the large and small rRNAs (23S and 16S). Processes some mRNAs, and tRNAs when they are encoded in the rRNA operon. Processes pre-crRNA and tracrRNA of type II CRISPR loci if present in the organism. In Rhizobium johnstonii (strain DSM 114642 / LMG 32736 / 3841) (Rhizobium leguminosarum bv. viciae), this protein is Ribonuclease 3.